Consider the following 177-residue polypeptide: NADH-quinone oxidoreductase subunit B (177 aa).

The [4Fe-4S] cluster site is built by Cys-36, Cys-37, Cys-101, and Cys-130.

It belongs to the complex I 20 kDa subunit family. As to quaternary structure, NDH-1 is composed of 14 different subunits. Subunits NuoB, C, D, E, F, and G constitute the peripheral sector of the complex. Requires [4Fe-4S] cluster as cofactor.

The protein resides in the cell inner membrane. It catalyses the reaction a quinone + NADH + 5 H(+)(in) = a quinol + NAD(+) + 4 H(+)(out). Its function is as follows. NDH-1 shuttles electrons from NADH, via FMN and iron-sulfur (Fe-S) centers, to quinones in the respiratory chain. The immediate electron acceptor for the enzyme in this species is believed to be ubiquinone. Couples the redox reaction to proton translocation (for every two electrons transferred, four hydrogen ions are translocated across the cytoplasmic membrane), and thus conserves the redox energy in a proton gradient. In Hydrogenobaculum sp. (strain Y04AAS1), this protein is NADH-quinone oxidoreductase subunit B.